The following is a 429-amino-acid chain: MAAVAVVGGQWGDEGKGKITDFLSKDATMAVRSNGGNNAGHTIDIDGKEFKMRLIPSGIFAASKAAVIGNGVVINPEVMFGELDNLEKNGIDTSKLRISNRAHIIMPYDVKQDEYQEEAKGDRKIGTTKNGIGPTYMDKASRIGIRVCDLLEKDTFEEKLRLNLKVKNELFTKVYGKPALKLEDIFDKYYEYGQKMKKYVTDTSVLVNDALDNGEKVLFEGAQGTMLDIDEGTYPYVTSSNTISGGICSGIGMGANRLNTVIGVCKAYTTRVGEGPFPTELLDEVGDRIRDTAHEYGTVTGRPRRVGWFDSVALRHAKRVSGINGLSLNLLDVFSGFDKIKICTAYELDGKKIEYYPASLKELYRCKPVYEELPAWEEDITAAKKLDDLPENAQKFLNRVSELVGVPLVTVSVGPDREQTIVLKNPWER.

Residues glycine 12–lysine 18 and glycine 40–threonine 42 contribute to the GTP site. Aspartate 13 (proton acceptor) is an active-site residue. Mg(2+)-binding residues include aspartate 13 and glycine 40. IMP is bound by residues aspartate 13 to lysine 16, asparagine 38 to histidine 41, threonine 128, arginine 142, glutamine 223, threonine 238, and arginine 302. The active-site Proton donor is the histidine 41. A substrate-binding site is contributed by threonine 298–arginine 304. GTP contacts are provided by residues arginine 304, leucine 330 to aspartate 332, and serine 412 to glycine 414.

Belongs to the adenylosuccinate synthetase family. Homodimer. Mg(2+) is required as a cofactor.

The protein localises to the cytoplasm. The catalysed reaction is IMP + L-aspartate + GTP = N(6)-(1,2-dicarboxyethyl)-AMP + GDP + phosphate + 2 H(+). It functions in the pathway purine metabolism; AMP biosynthesis via de novo pathway; AMP from IMP: step 1/2. Its function is as follows. Plays an important role in the de novo pathway of purine nucleotide biosynthesis. Catalyzes the first committed step in the biosynthesis of AMP from IMP. This Lactobacillus helveticus (strain DPC 4571) protein is Adenylosuccinate synthetase.